Consider the following 984-residue polypeptide: Probable translation initiation factor IF-2 (984 aa).

Positions 94 to 215 constitute a DOD-type homing endonuclease domain; that stretch reads VNGWYSVTVT…LPLLLLRFGI (122 aa). The 218-residue stretch at 391–608 folds into the tr-type G domain; the sequence is TTETHNFVAN…LIAGLSQKYL (218 aa). Residues 464-468 and 518-521 contribute to the GTP site; these read DTPGH and NKID.

It belongs to the TRAFAC class translation factor GTPase superfamily. Classic translation factor GTPase family. IF-2 subfamily. This protein undergoes a protein self splicing that involves a post-translational excision of the intervening region (intein) followed by peptide ligation.

Its function is as follows. Function in general translation initiation by promoting the binding of the formylmethionine-tRNA to ribosomes. Seems to function along with eIF-2. This is Probable translation initiation factor IF-2 (infB) from Pyrococcus furiosus (strain ATCC 43587 / DSM 3638 / JCM 8422 / Vc1).